We begin with the raw amino-acid sequence, 374 residues long: DNA integrity scanning protein DisA (374 aa).

A DAC domain is found at 20-158 (DGLMRASLSA…DGQRRVLEDS (139 aa)). Residues Gly87, Leu105, and 118–122 (TRHRT) each bind ATP.

Belongs to the DisA family. As to quaternary structure, homooctamer. Interacts with RadA. The cofactor is Mg(2+).

It carries out the reaction 2 ATP = 3',3'-c-di-AMP + 2 diphosphate. Diadenylate cyclase activity is inhibited by the interaction with RadA. In terms of biological role, participates in a DNA-damage check-point that is active prior to asymmetric division when DNA is damaged. DisA forms globular foci that rapidly scan along the chromosomes during sporulation, searching for lesions. When a lesion is present, DisA pauses at the lesion site. This triggers a cellular response that culminates in a temporary block in sporulation initiation. Functionally, also has diadenylate cyclase activity, catalyzing the condensation of 2 ATP molecules into cyclic di-AMP (c-di-AMP). c-di-AMP acts as a signaling molecule that couples DNA integrity with progression of sporulation. The rise in c-di-AMP level generated by DisA while scanning the chromosome, operates as a positive signal that advances sporulation; upon encountering a lesion, the DisA focus arrests at the damaged site and halts c-di-AMP synthesis. The polypeptide is DNA integrity scanning protein DisA (Streptomyces coelicolor (strain ATCC BAA-471 / A3(2) / M145)).